The following is a 533-amino-acid chain: Probable G-protein coupled receptor Mth-like 14 (533 aa).

Positions 1-23 (MNLGHWNFLLALISLQTFFNASA) are cleaved as a signal peptide. 5 N-linked (GlcNAc...) asparagine glycosylation sites follow: Asn-20, Asn-29, Asn-30, Asn-36, and Asn-47. Residues 24-242 (QISTVNNSSK…QVEEQIAFAK (219 aa)) lie on the Extracellular side of the membrane. Positions 86-108 (VQSPVDNPLDPADCSQREKYRKQ) are disordered. Cysteines 120 and 216 form a disulfide. Residues Asn-133, Asn-178, and Asn-206 are each glycosylated (N-linked (GlcNAc...) asparagine). Residues 243-263 (VVFVAVLMLISMPCLLLVSYL) traverse the membrane as a helical segment. At 264–279 (HMTLRLLRNLHGLSLS) the chain is on the cytoplasmic side. The helical transmembrane segment at 280–300 (LMSLCLASGYFVHSVVHIYGI) threads the bilayer. At 301–303 (PNQ) the chain is on the extracellular side. A helical membrane pass occupies residues 304-324 (GFIGYVIQFCILSYFFWYLCI). Over 325 to 347 (CFNVLLNVWYKLPCCIQCSKSWA) the chain is Cytoplasmic. Residues 348-368 (TFNFACYAVFAFSGPATIVAL) traverse the membrane as a helical segment. The Extracellular segment spans residues 369–395 (TVQKGLPGMPSYFLQGLTESIRDSQRY). A helical transmembrane segment spans residues 396–416 (FIPPVSTILFLSFLLNIISFF). Residues 417-451 (GFQRISGYAKAEKNIQERKCLFDQQKYEDVKKDAK) lie on the Cytoplasmic side of the membrane. A helical transmembrane segment spans residues 452–472 (CVSLLGIIMVVSWLLEIITFY). Residues 473 to 480 (SGSNSNYL) are Extracellular-facing. The chain crosses the membrane as a helical span at residues 481–501 (ILCDMVNGLQGVWVLLIFLVV). Residues 502–533 (RRRRTIILRWWYDRGSHEIEGTELQALSNSPT) are Cytoplasmic-facing.

The protein belongs to the G-protein coupled receptor 2 family. Mth subfamily.

Its subcellular location is the cell membrane. This Drosophila melanogaster (Fruit fly) protein is Probable G-protein coupled receptor Mth-like 14 (mthl14).